Consider the following 461-residue polypeptide: MPLTPSHKGAVCSDCQGRLEDAVTAACGHTFCRLCLPLPPQMGAQPSSRVLLCPVCQEKEQTEPVLVPVPLGPLGETYCEEHGEKIYFFCENDAEFLCVFCREGPSHQAHAVGFLDEAIQPYRDRLRGRLEALITERDEIEDMKSREDQKLQVLLAQIESKKRHVEATFERLQQELGEQQRLLLARLTELERQIWKERDKYISKLSEEVARLGTQVKELEEKCQQPASELLQDVRVNQSRCETKTFVSPEAISPDLVKKIRDLHRKILTLPEMLRAFSENLVHHLETDSGIVTLDPLTASPSLVLSEDRKSVRYTRQKQNLPDSPLRFEGLPVVLGSPGFSSGRHRWQVEVQLGEGGGCTVGVVGEEVRRKGEQGLSAEEGVWAVILSHQQCWASTSPGTDLPLSEIPRRVGVALDYEAGRVALLNAETRAPIFTFAASFSGKVFPFFAVWKKGSCLTLKG.

The RING-type zinc-finger motif lies at 12–57; the sequence is CSDCQGRLEDAVTAACGHTFCRLCLPLPPQMGAQPSSRVLLCPVCQ. The B box-type zinc finger occupies 74-115; that stretch reads LGETYCEEHGEKIYFFCENDAEFLCVFCREGPSHQAHAVGFL. Residues Cys-79, His-82, Cys-101, and His-107 each coordinate Zn(2+). Residues 123-230 are a coiled coil; that stretch reads RDRLRGRLEA…EKCQQPASEL (108 aa). Residues 272–461 form the B30.2/SPRY domain; that stretch reads EMLRAFSENL…KKGSCLTLKG (190 aa).

This sequence belongs to the TRIM/RBCC family. Interacts with paxillin/PXN; this interaction recruits TRIM15 to focal adhesions. Interacts with TRIM8; this interaction prevents TRIM8 cytoplasmic translocation.

It is found in the cytoplasm. It localises to the nucleus. The protein resides in the cell junction. The protein localises to the focal adhesion. The enzyme catalyses S-ubiquitinyl-[E2 ubiquitin-conjugating enzyme]-L-cysteine + [acceptor protein]-L-lysine = [E2 ubiquitin-conjugating enzyme]-L-cysteine + N(6)-ubiquitinyl-[acceptor protein]-L-lysine.. E3 ubiquitin ligase that plays a role in several processes including innate antiviral immnity, cell migration and chemotaxis. Acts as a 'Lys-63'-specific ubiquitin ligase for MAPK1/ERK2 and MAPK3/ERK1, promoting their activation by facilitating their interaction with MAP2K1 and MAP2K2. Also plays a role in cell migration and chemotaxis by acting as a stable focal adhesion component upon recruitment by multi-adapter protein paxillin/PXN. Functions in the RIGI-mediated interferon induction pathway upstream or at the level of MAVS. Inhibits NF-kappa-B activation by turnover of 'Lys-63'-linked ubiquitination of MAP3K7/TAK1. Mechanistically, prevents TRIM8 cytoplasmic translocation and thus inhibits TRIM8-mediated 'Lys-63'-linked polyubiquitination of MAP3K7/TAK1 in the cytoplasm. Also has an important regulatory effect on the activation of hepatic stellate cells (HSCs). This Sus scrofa (Pig) protein is E3 ubiquitin-protein ligase TRIM15 (TRIM15).